The following is a 234-amino-acid chain: Matrix protein 1 (234 aa).

Residues 1–103 (MHERSKPKTT…QELAEGGIRM (103 aa)) form a disordered region. Basic and acidic residues predominate over residues 76–96 (CDERSTIGRHGNADERPHQEL). Residues 183–234 (PEVSFKERMEAEKKKLKELDDKIYKLRRRLRKMEYKKMGINREIDKLEDSVQ) are a coiled coil.

As to quaternary structure, interacts with host HSC70.

It localises to the virion. The protein resides in the host cytoplasm. Its subcellular location is the host nucleus. In terms of biological role, may play a role in virus replication, from virus entry and uncoating to assembly and budding of the virus particle. Interaction of viral NEP with M1-Hsc70 is thought to promote nuclear export of the viral encapsidated genomes. The chain is Matrix protein 1 from Infectious salmon anemia virus (isolate Atlantic salmon/Norway/810/9/99) (ISAV).